A 339-amino-acid chain; its full sequence is tRNA N6-adenosine threonylcarbamoyltransferase (339 aa).

Residues H111 and H115 each coordinate Fe cation. Substrate-binding positions include 134 to 138 (LVSGG), D167, G180, and N270. D298 contributes to the Fe cation binding site.

Belongs to the KAE1 / TsaD family. Fe(2+) serves as cofactor.

It localises to the cytoplasm. The enzyme catalyses L-threonylcarbamoyladenylate + adenosine(37) in tRNA = N(6)-L-threonylcarbamoyladenosine(37) in tRNA + AMP + H(+). Functionally, required for the formation of a threonylcarbamoyl group on adenosine at position 37 (t(6)A37) in tRNAs that read codons beginning with adenine. Is involved in the transfer of the threonylcarbamoyl moiety of threonylcarbamoyl-AMP (TC-AMP) to the N6 group of A37, together with TsaE and TsaB. TsaD likely plays a direct catalytic role in this reaction. The chain is tRNA N6-adenosine threonylcarbamoyltransferase from Alkalilimnicola ehrlichii (strain ATCC BAA-1101 / DSM 17681 / MLHE-1).